The primary structure comprises 440 residues: Xylose isomerase (440 aa).

Catalysis depends on residues His-100 and Asp-103. Mg(2+)-binding residues include Glu-231, Glu-267, His-270, Asp-295, Asp-306, Asp-308, and Asp-338.

Belongs to the xylose isomerase family. In terms of assembly, homotetramer. Mg(2+) serves as cofactor.

Its subcellular location is the cytoplasm. It carries out the reaction alpha-D-xylose = alpha-D-xylulofuranose. This chain is Xylose isomerase, found in Burkholderia cenocepacia (strain HI2424).